The chain runs to 123 residues: Large ribosomal subunit protein bL19 (123 aa).

It belongs to the bacterial ribosomal protein bL19 family.

Its function is as follows. This protein is located at the 30S-50S ribosomal subunit interface and may play a role in the structure and function of the aminoacyl-tRNA binding site. The sequence is that of Large ribosomal subunit protein bL19 from Thermomicrobium roseum (strain ATCC 27502 / DSM 5159 / P-2).